Consider the following 44-residue polypeptide: uncharacterized protein (44 aa).

This is an uncharacterized protein from Caenorhabditis elegans.